Reading from the N-terminus, the 92-residue chain is Small ribosomal subunit protein uS19 (92 aa).

The protein belongs to the universal ribosomal protein uS19 family. Part of the 30S ribosomal subunit.

Functionally, protein S19 forms a complex with S13 that binds strongly to the 16S ribosomal RNA. In Bacillus subtilis (strain 168), this protein is Small ribosomal subunit protein uS19 (rpsS).